The chain runs to 1024 residues: Beta-galactosidase (1024 aa).

Substrate-binding residues include Asn103 and Asp202. Asp202 lines the Na(+) pocket. 3 residues coordinate Mg(2+): Glu417, His419, and Glu462. Residues Glu462 and Glu538 to His541 each bind substrate. The Proton donor role is filled by Glu462. Catalysis depends on Glu538, which acts as the Nucleophile. Asn598 is a binding site for Mg(2+). Phe602 and Asn605 together coordinate Na(+). The substrate site is built by Asn605 and Trp1000.

It belongs to the glycosyl hydrolase 2 family. Homotetramer. Mg(2+) serves as cofactor. Na(+) is required as a cofactor.

It catalyses the reaction Hydrolysis of terminal non-reducing beta-D-galactose residues in beta-D-galactosides.. The chain is Beta-galactosidase from Escherichia coli O17:K52:H18 (strain UMN026 / ExPEC).